The primary structure comprises 357 residues: Glutamate 5-kinase (357 aa).

Lys-7 is a binding site for ATP. Substrate-binding residues include Ser-43, Asp-130, and Asn-142. Residues 162-163 (TD) and 205-211 (TGGMTTK) each bind ATP. The region spanning 270 to 341 (EGELCLDQGA…QALSVVTDAE (72 aa)) is the PUA domain.

It belongs to the glutamate 5-kinase family.

It is found in the cytoplasm. It catalyses the reaction L-glutamate + ATP = L-glutamyl 5-phosphate + ADP. It participates in amino-acid biosynthesis; L-proline biosynthesis; L-glutamate 5-semialdehyde from L-glutamate: step 1/2. Catalyzes the transfer of a phosphate group to glutamate to form L-glutamate 5-phosphate. The protein is Glutamate 5-kinase of Synechococcus sp. (strain CC9902).